The following is a 129-amino-acid chain: MDKKAIFDSVSNMEEQIGELYQQLGDLKTNLGEMLEENNRLNLENEHLRRRLSLTDEGTLEPVAEEEAVHGVMAPNRKEAMQQMIELGEGYDNLVQLYKEGFHVCNVHFGSPRGNDEDCLFCLSLLNKK.

His-103, Cys-105, Cys-119, and Cys-122 together coordinate Zn(2+).

This sequence belongs to the YabA family. Homotetramer. Interacts with both DnaA and DnaN, acting as a bridge between these two proteins. Zn(2+) is required as a cofactor.

Its subcellular location is the cytoplasm. The protein localises to the nucleoid. In terms of biological role, involved in control of chromosome replication initiation. Inhibits the cooperative binding of DnaA to the oriC region, thus negatively regulating initiation of chromosome replication. Inhibits the ability of DnaA-ATP to form a helix on DNA; does not disassemble preformed DnaA-DNA helices. Decreases the residence time of DnaA on the chromosome at its binding sites (oriC, replication forks and promoter-binding sites). Tethers DnaA to the replication machinery via the DNA polymerase beta sliding clamp subunit (dnaN). Associates with oriC and other DnaA targets on the chromosome in a DnaA-dependent manner. In Listeria welshimeri serovar 6b (strain ATCC 35897 / DSM 20650 / CCUG 15529 / CIP 8149 / NCTC 11857 / SLCC 5334 / V8), this protein is Replication initiation control protein YabA.